Reading from the N-terminus, the 1177-residue chain is Topoisomerase 1-associated factor 1 (1177 aa).

Disordered regions lie at residues 332–353 (MDQT…GEQE), 576–598 (KKVA…TEDI), 802–830 (ALAA…SILV), 893–1012 (DPPT…DKDM), and 1028–1177 (AFGK…SDSE). Positions 586 to 597 (GDEEGQVSDTED) are enriched in acidic residues. Residues 893-908 (DPPTYEDGKGPEDLIR) are compositionally biased toward basic and acidic residues. Residues 923 to 934 (FDDDDEEAENAV) are compositionally biased toward acidic residues. 2 stretches are compositionally biased toward basic and acidic residues: residues 935 to 955 (EEDH…DGER) and 975 to 1001 (KDRR…FVHD). A compositionally biased stretch (acidic residues) spans 1002–1011 (SDEEDDDDKD). Residues 1054-1066 (RTKRRKTPPKRKA) show a composition bias toward basic residues. The segment covering 1071–1080 (DSDDSDEDVQ) has biased composition (acidic residues). The segment covering 1129–1140 (TTGATASITVKS) has biased composition (polar residues). The segment covering 1145–1155 (MADDDDEEDEA) has biased composition (acidic residues).

Belongs to the timeless family. In terms of assembly, component of the fork protection complex (FPC) consisting of TOF1 and CSM3.

It localises to the nucleus. Functionally, forms a fork protection complex (FPC) with CSM3 and which is required for chromosome segregation during meiosis and DNA damage repair. FPC coordinates leading and lagging strand synthesis and moves with the replication fork. FPC stabilizes replication forks in a configuration that is recognized by replication checkpoint sensors. The chain is Topoisomerase 1-associated factor 1 (TOF1) from Phaeosphaeria nodorum (strain SN15 / ATCC MYA-4574 / FGSC 10173) (Glume blotch fungus).